The following is a 296-amino-acid chain: Phosphoribosylaminoimidazole-succinocarboxamide synthase (296 aa).

This sequence belongs to the SAICAR synthetase family.

The enzyme catalyses 5-amino-1-(5-phospho-D-ribosyl)imidazole-4-carboxylate + L-aspartate + ATP = (2S)-2-[5-amino-1-(5-phospho-beta-D-ribosyl)imidazole-4-carboxamido]succinate + ADP + phosphate + 2 H(+). Its pathway is purine metabolism; IMP biosynthesis via de novo pathway; 5-amino-1-(5-phospho-D-ribosyl)imidazole-4-carboxamide from 5-amino-1-(5-phospho-D-ribosyl)imidazole-4-carboxylate: step 1/2. The chain is Phosphoribosylaminoimidazole-succinocarboxamide synthase from Geobacter sp. (strain M21).